The primary structure comprises 617 residues: MREEKSKTNKLAWSKKMVRKWFNIKSKTEEFQADDPSSAGIEVEHRSSFSAEKAPSTIKNTKTEKLSKNWEQQARQRRMNYENPRIIDVQNYSIFVATWNVAGRSPPSDLNLDEWLHSSAPADIYVLGFQEIVPLNAGNVLGAEDNGPAQKWLSLIRKTLNNRPGTSGTSGYHTPSPIPVPMAELDADFSGSTRQKNSTFFHRRSFQTPSSTWNDPSIPQPGLDRRFSVCDRVFFSHRPSDFDPSFRGSSSSHRPSDYSRRPSDYSRRPSDYSRRPSDYSRRPSDSRPSDYSRPSDYYSRPSDYSRPSDFSRSSDDDNGLGDSPSTVLYSPGSAANENGYRIPWNSSQYCLVASKQMVGVFLTIWVKSELREHVKNMKVSCVGRGLMGYLGNKGSISISMLLHQTSFCFVCTHLTSGQKEGDELKRNSDVMEILKKTRFPRVKSSEEEKSPENILQHDRVIWLGDLNYRIALSYRSAKALVEMQNWRALLENDQLRIEQKRGHVFKGWNEGKIYFPPTYKYSRNSDRYSGDDLHPKEKRRTPAWCDRILWFGEGLHQLSYVRGESRFSDHRPVYGIFCAEVESAHNRIKRTTSYSASRVQAEELLPYSRGYTELSFF.

Disordered regions lie at residues 30-62 and 241-330; these read EFQA…KNTK and DFDP…VLYS. Over residues 242–253 the composition is skewed to low complexity; sequence FDPSFRGSSSSH. A compositionally biased stretch (basic and acidic residues) spans 254-290; it reads RPSDYSRRPSDYSRRPSDYSRRPSDYSRRPSDSRPSD. The span at 291–311 shows a compositional bias: low complexity; sequence YSRPSDYYSRPSDYSRPSDFS. Catalytic stretches follow at residues 458–473 and 538–553; these read DRVI…IALS and KRRT…WFGE.

The protein belongs to the inositol polyphosphate 5-phosphatase family. In terms of tissue distribution, broadly expressed in emerging organs. Mostly localized in procambium of growing organs. Restricted to vascular differentiating cells of young organs.

It carries out the reaction a 1,2-diacyl-sn-glycero-3-phospho-(1D-myo-inositol-4,5-bisphosphate) + H2O = a 1,2-diacyl-sn-glycero-3-phospho-(1D-myo-inositol 4-phosphate) + phosphate. The catalysed reaction is a 1,2-diacyl-sn-glycero-3-phospho-(1D-myo-inositol-3,4,5-trisphosphate) + H2O = a 1,2-diacyl-sn-glycero-3-phospho-(1D-myo-inositol-3,4-bisphosphate) + phosphate. Functionally, has phosphatase activity toward PtdIns(4,5)P2 and PtdIns(3,4,5)P3. Required for the patterning of procambium and during the differentiation of vascular tissues. Acts before the acquisition of preprocambial identity. Seems to be also involved in the abscisic acid (ABA) signaling pathway. Acts redundantly with CVL1 for maintaining vascular continuity. Regulates phosphoinositide-dependent VAN3 localization. In Arabidopsis thaliana (Mouse-ear cress), this protein is Type IV inositol polyphosphate 5-phosphatase 6.